We begin with the raw amino-acid sequence, 243 residues long: Ribonuclease PH (243 aa).

Phosphate contacts are provided by residues arginine 91 and 129–131 (GTR).

Belongs to the RNase PH family. Homohexameric ring arranged as a trimer of dimers.

The catalysed reaction is tRNA(n+1) + phosphate = tRNA(n) + a ribonucleoside 5'-diphosphate. Functionally, phosphorolytic 3'-5' exoribonuclease that plays an important role in tRNA 3'-end maturation. Removes nucleotide residues following the 3'-CCA terminus of tRNAs; can also add nucleotides to the ends of RNA molecules by using nucleoside diphosphates as substrates, but this may not be physiologically important. Probably plays a role in initiation of 16S rRNA degradation (leading to ribosome degradation) during starvation. The chain is Ribonuclease PH from Burkholderia lata (strain ATCC 17760 / DSM 23089 / LMG 22485 / NCIMB 9086 / R18194 / 383).